We begin with the raw amino-acid sequence, 130 residues long: Large ribosomal subunit protein eL32 (130 aa).

Belongs to the eukaryotic ribosomal protein eL32 family. Part of the 50S ribosomal subunit.

The sequence is that of Large ribosomal subunit protein eL32 from Pyrococcus furiosus (strain ATCC 43587 / DSM 3638 / JCM 8422 / Vc1).